A 232-amino-acid chain; its full sequence is Uracil-DNA glycosylase (232 aa).

The active-site Proton acceptor is the D70.

Belongs to the uracil-DNA glycosylase (UDG) superfamily. UNG family.

Its subcellular location is the cytoplasm. The enzyme catalyses Hydrolyzes single-stranded DNA or mismatched double-stranded DNA and polynucleotides, releasing free uracil.. Functionally, excises uracil residues from the DNA which can arise as a result of misincorporation of dUMP residues by DNA polymerase or due to deamination of cytosine. In Campylobacter fetus subsp. fetus (strain 82-40), this protein is Uracil-DNA glycosylase.